A 94-amino-acid chain; its full sequence is Putative pterin-4-alpha-carbinolamine dehydratase (94 aa).

The protein belongs to the pterin-4-alpha-carbinolamine dehydratase family.

It carries out the reaction (4aS,6R)-4a-hydroxy-L-erythro-5,6,7,8-tetrahydrobiopterin = (6R)-L-erythro-6,7-dihydrobiopterin + H2O. The protein is Putative pterin-4-alpha-carbinolamine dehydratase of Koribacter versatilis (strain Ellin345).